Here is a 186-residue protein sequence, read N- to C-terminus: Transposon Tn501 resolvase (186 aa).

One can recognise a Resolvase/invertase-type recombinase catalytic domain in the interval 4 to 137 (HRIGYVRVSS…EGITLAKQRG (134 aa)). The active-site O-(5'-phospho-DNA)-serine intermediate is the Ser12. The segment at 17–38 (NPERQLEQTQVSKVFTDKASGK) is disordered. The H-T-H motif DNA-binding region spans 164 to 183 (KAQLAREFNISRETLYQYLR).

This sequence belongs to the site-specific recombinase resolvase family.

Its function is as follows. Resolvase catalyzes the resolution (a site-specific recombination) of the cointegrated replicon to yield the final transposition products. In Pseudomonas aeruginosa, this protein is Transposon Tn501 resolvase (tnpR).